The primary structure comprises 1013 residues: Ephrin type-A receptor 5 (1013 aa).

The signal sequence occupies residues 1 to 31 (MGLRGGGGRAGGPAPGWTCLLLCAALRSLLA). The Extracellular segment spans residues 32-549 (SPGSEVNLLD…AASSDQSQIP (518 aa)). Positions 36 to 214 (EVNLLDSRTV…YYKKCPSVIR (179 aa)) constitute an Eph LBD domain. N-linked (GlcNAc...) asparagine glycans are attached at residues Asn-240, Asn-275, Asn-345, Asn-399, Asn-412, and Asn-437. Fibronectin type-III domains lie at 333 to 443 (PPSA…TNQA) and 444 to 538 (APSP…TSPV). A helical membrane pass occupies residues 550–570 (IIVVSVTVGVILLAVVIGFLL). The Cytoplasmic portion of the chain corresponds to 571-1013 (SGSCCDHGCG…VQLVNGMVPL (443 aa)). Phosphotyrosine; by autocatalysis occurs at positions 626 and 632. The Protein kinase domain occupies 651–912 (ITIERVIGAG…EIVSMLDKLI (262 aa)). ATP contacts are provided by residues 657–665 (IGAGEFGEV) and Lys-683. The active-site Proton acceptor is the Asp-776. Phosphotyrosine; by autocatalysis is present on residues Tyr-809 and Tyr-958. The region spanning 941–1013 (GAYRSVGEWL…VQLVNGMVPL (73 aa)) is the SAM domain. Positions 1011 to 1013 (VPL) match the PDZ-binding motif.

Belongs to the protein kinase superfamily. Tyr protein kinase family. Ephrin receptor subfamily. As to quaternary structure, heterotetramer upon binding of the ligand. The heterotetramer is composed of an ephrin dimer and a receptor dimer. Oligomerization is probably required to induce biological responses. Phosphorylated. Phosphorylation is stimulated by the ligand EFNA5. In terms of tissue distribution, detected in the 10-day embryonic brain, weaker expression in the rest of the 10-day embryo. Undetected in adult tissues.

The protein resides in the cell membrane. Its subcellular location is the cell projection. It localises to the axon. It is found in the dendrite. It carries out the reaction L-tyrosyl-[protein] + ATP = O-phospho-L-tyrosyl-[protein] + ADP + H(+). Its function is as follows. Receptor tyrosine kinase which binds promiscuously GPI-anchored ephrin-A family ligands residing on adjacent cells, leading to contact-dependent bidirectional signaling into neighboring cells. The signaling pathway downstream of the receptor is referred to as forward signaling while the signaling pathway downstream of the ephrin ligand is referred to as reverse signaling. Among GPI-anchored ephrin-A ligands, EFNA5 most probably constitutes the cognate/functional ligand for EPHA5. Functions as an axon guidance molecule during development and may be involved in the development of the retinotectal, entorhino-hippocampal and hippocamposeptal pathways. Together with EFNA5 plays also a role in synaptic plasticity in adult brain through regulation of synaptogenesis. The sequence is that of Ephrin type-A receptor 5 (EPHA5) from Gallus gallus (Chicken).